The following is a 376-amino-acid chain: DNA repair protein RAD51 homolog 3 (376 aa).

A required for Holliday junction resolution activity region spans residues 1–126 (MRGKTFRFEM…LMKTTEICGA (126 aa)). Ser20 carries the post-translational modification Phosphoserine. Residues 79 to 136 (SESHKKCTALELLEQEHTQGFIITFCSALDDILGGGVPLMKTTEICGAPGVGKTQLCM) form an interaction with RAD51B, RAD51D and XRCC3 region. Position 125–132 (125–132 (GAPGVGKT)) interacts with ATP. The Nuclear localization signal signature appears at 366 to 370 (RKRSR).

This sequence belongs to the RecA family. RAD51 subfamily. In terms of assembly, part of the RAD51 paralog protein complexes BCDX2 and CX3; the complexes have a ring-like structure arranged into a flat disc around a central channel. The BCDX2 complex consits of RAD51B, RAD51C, RAD51D and XRCC2; the CX3 complex consists of RAD51C and XRCC3. The BCDX2 subcomplex RAD51B:RAD51C interacts with RAD51. Interacts with SWSAP1; involved in homologous recombination repair. Interacts directly with PALB2 which may serve as a scaffold for a HR complex containing PALB2, BRCA2, RAD51C, RAD51 and XRCC3. Interacts with HELQ. Interacts with DNA damage up-regulated protein DDUP. In terms of tissue distribution, expressed in a variety of tissues, with highest expression in testis, heart muscle, spleen and prostate.

The protein resides in the nucleus. It is found in the cytoplasm. Its subcellular location is the perinuclear region. It localises to the mitochondrion. Its function is as follows. Essential for the homologous recombination (HR) pathway of DNA repair. Involved in the homologous recombination repair (HRR) pathway of double-stranded DNA breaks arising during DNA replication or induced by DNA-damaging agents. Part of the RAD51 paralog protein complexes BCDX2 and CX3 which act at different stages of the BRCA1-BRCA2-dependent HR pathway. Upon DNA damage, BCDX2 seems to act downstream of BRCA2 recruitment and upstream of RAD51 recruitment; CX3 seems to act downstream of RAD51 recruitment; both complexes bind predominantly to the intersection of the four duplex arms of the Holliday junction (HJ) and to junction of replication forks. The BCDX2 complex was originally reported to bind single-stranded DNA, single-stranded gaps in duplex DNA and specifically to nicks in duplex DNA. The BCDX2 subcomplex RAD51B:RAD51C exhibits single-stranded DNA-dependent ATPase activity suggesting an involvement in early stages of the HR pathway. Involved in RAD51 foci formation in response to DNA damage suggesting an involvement in early stages of HR probably in the invasion step. Has an early function in DNA repair in facilitating phosphorylation of the checkpoint kinase CHEK2 and thereby transduction of the damage signal, leading to cell cycle arrest and HR activation. Participates in branch migration and HJ resolution and thus is important for processing HR intermediates late in the DNA repair process; the function may be linked to the CX3 complex. Part of a PALB2-scaffolded HR complex containing BRCA2 and which is thought to play a role in DNA repair by HR. Protects RAD51 from ubiquitin-mediated degradation that is enhanced following DNA damage. Plays a role in regulating mitochondrial DNA copy number under conditions of oxidative stress in the presence of RAD51 and XRCC3. Contributes to DNA cross-link resistance, sister chromatid cohesion and genomic stability. Involved in maintaining centrosome number in mitosis. The sequence is that of DNA repair protein RAD51 homolog 3 (RAD51C) from Homo sapiens (Human).